Reading from the N-terminus, the 135-residue chain is Putative pre-16S rRNA nuclease (135 aa).

It belongs to the YqgF nuclease family.

It is found in the cytoplasm. Its function is as follows. Could be a nuclease involved in processing of the 5'-end of pre-16S rRNA. This chain is Putative pre-16S rRNA nuclease, found in Thermus thermophilus (strain ATCC 27634 / DSM 579 / HB8).